Consider the following 264-residue polypeptide: Glutamate racemase (264 aa).

Residues 10 to 11 and 42 to 43 contribute to the substrate site; these read DS and YG. The active-site Proton donor/acceptor is the Cys-73. 74–75 is a binding site for substrate; that stretch reads NT. Residue Cys-183 is the Proton donor/acceptor of the active site. 184 to 185 is a binding site for substrate; it reads TH.

It belongs to the aspartate/glutamate racemases family.

The enzyme catalyses L-glutamate = D-glutamate. It functions in the pathway cell wall biogenesis; peptidoglycan biosynthesis. Its function is as follows. Provides the (R)-glutamate required for cell wall biosynthesis. This is Glutamate racemase from Streptococcus pyogenes serotype M3 (strain ATCC BAA-595 / MGAS315).